Consider the following 212-residue polypeptide: Fe/S biogenesis protein NfuA (212 aa).

Cys-169 and Cys-172 together coordinate [4Fe-4S] cluster.

Belongs to the NfuA family. Homodimer. The cofactor is [4Fe-4S] cluster.

Functionally, involved in iron-sulfur cluster biogenesis. Binds a 4Fe-4S cluster, can transfer this cluster to apoproteins, and thereby intervenes in the maturation of Fe/S proteins. Could also act as a scaffold/chaperone for damaged Fe/S proteins. The chain is Fe/S biogenesis protein NfuA from Acinetobacter baumannii (strain AB307-0294).